Reading from the N-terminus, the 157-residue chain is Subgroup A Rous sarcoma virus receptor pg950 (157 aa).

The N-terminal stretch at 1–19 is a signal peptide; it reads MARLLPALLLLLLPGNVTG. Asn-20 and Asn-24 each carry an N-linked (GlcNAc...) asparagine glycan. At 20–102 the chain is on the extracellular side; it reads NGSGNGSLSR…RALPARNHGR (83 aa). Residues 28–71 enclose the LDL-receptor class A domain; that stretch reads SRCPPGQFRCSEPPGAHGECYPQDWLCDGHPDCDDGRDEWGCGT. 3 cysteine pairs are disulfide-bonded: Cys-30–Cys-47, Cys-37–Cys-60, and Cys-54–Cys-69. A glycan (N-linked (GlcNAc...) asparagine) is linked at Asn-81. Residues 103–125 form a helical membrane-spanning segment; that stretch reads MWMLITAVLLCCLVAVGGIAAWG. Topologically, residues 126–157 are cytoplasmic; it reads KSKAKSRSDIFSLASASKELLVPDKSQADLFS.

In terms of assembly, (Microbial infection) Interacts with Rous sarcoma virus envelope protein; this interaction allows the viral attachment.

The protein localises to the membrane. Responsible for susceptibility to the retrovirus subgroup A Rous sarcoma virus. This chain is Subgroup A Rous sarcoma virus receptor pg950, found in Coturnix japonica (Japanese quail).